Here is a 25-residue protein sequence, read N- to C-terminus: Bifunctional chitinase/lysozyme (25 aa).

This sequence belongs to the glycosyl hydrolase 19 family. Chitinase class I subfamily. Monomer.

It localises to the secreted. The protein resides in the extracellular space. It carries out the reaction Random endo-hydrolysis of N-acetyl-beta-D-glucosaminide (1-&gt;4)-beta-linkages in chitin and chitodextrins.. The catalysed reaction is Hydrolysis of (1-&gt;4)-beta-linkages between N-acetylmuramic acid and N-acetyl-D-glucosamine residues in a peptidoglycan and between N-acetyl-D-glucosamine residues in chitodextrins.. In terms of biological role, bifunctional enzyme with lysozyme/chitinase activity. This is Bifunctional chitinase/lysozyme from Carica papaya (Papaya).